Here is a 499-residue protein sequence, read N- to C-terminus: Lysine--tRNA ligase (499 aa).

Mg(2+)-binding residues include Glu408 and Glu415.

This sequence belongs to the class-II aminoacyl-tRNA synthetase family. Homodimer. It depends on Mg(2+) as a cofactor.

It is found in the cytoplasm. The catalysed reaction is tRNA(Lys) + L-lysine + ATP = L-lysyl-tRNA(Lys) + AMP + diphosphate. In Bacillus mycoides (strain KBAB4) (Bacillus weihenstephanensis), this protein is Lysine--tRNA ligase.